Consider the following 461-residue polypeptide: Bifunctional protein HldE (461 aa).

A ribokinase region spans residues 1–315; sequence MKKILVIGDL…LILNQTHPKI (315 aa). Position 191–194 (191–194) interacts with ATP; the sequence is NRTE. Asp-260 is a catalytic residue. Residues 332-461 are cytidylyltransferase; that stretch reads FTNGCFDLLH…IEKIKRTCND (130 aa).

It in the N-terminal section; belongs to the carbohydrate kinase PfkB family. The protein in the C-terminal section; belongs to the cytidylyltransferase family. As to quaternary structure, homodimer.

It catalyses the reaction D-glycero-beta-D-manno-heptose 7-phosphate + ATP = D-glycero-beta-D-manno-heptose 1,7-bisphosphate + ADP + H(+). The enzyme catalyses D-glycero-beta-D-manno-heptose 1-phosphate + ATP + H(+) = ADP-D-glycero-beta-D-manno-heptose + diphosphate. It functions in the pathway nucleotide-sugar biosynthesis; ADP-L-glycero-beta-D-manno-heptose biosynthesis; ADP-L-glycero-beta-D-manno-heptose from D-glycero-beta-D-manno-heptose 7-phosphate: step 1/4. The protein operates within nucleotide-sugar biosynthesis; ADP-L-glycero-beta-D-manno-heptose biosynthesis; ADP-L-glycero-beta-D-manno-heptose from D-glycero-beta-D-manno-heptose 7-phosphate: step 3/4. It participates in bacterial outer membrane biogenesis; LPS core biosynthesis. In terms of biological role, catalyzes the phosphorylation of D-glycero-D-manno-heptose 7-phosphate at the C-1 position to selectively form D-glycero-beta-D-manno-heptose-1,7-bisphosphate. Functionally, catalyzes the ADP transfer from ATP to D-glycero-beta-D-manno-heptose 1-phosphate, yielding ADP-D-glycero-beta-D-manno-heptose. The sequence is that of Bifunctional protein HldE from Helicobacter pylori (strain ATCC 700392 / 26695) (Campylobacter pylori).